The following is a 225-amino-acid chain: Endonuclease V (225 aa).

Residues Asp-43 and Asp-110 each contribute to the Mg(2+) site.

It belongs to the endonuclease V family. Requires Mg(2+) as cofactor.

The protein localises to the cytoplasm. It catalyses the reaction Endonucleolytic cleavage at apurinic or apyrimidinic sites to products with a 5'-phosphate.. In terms of biological role, DNA repair enzyme involved in the repair of deaminated bases. Selectively cleaves double-stranded DNA at the second phosphodiester bond 3' to a deoxyinosine leaving behind the intact lesion on the nicked DNA. The sequence is that of Endonuclease V from Thermotoga sp. (strain RQ2).